Reading from the N-terminus, the 421-residue chain is MVSASHPEALAAPVTTVATLVPHNATEPASPGEGKEDAFSKLKQKFMNELHKIPLPPWALIAIAIVAVLLVVTCCFCVCKKCLFKKKNKKKGKEKGGKNAINMKDVKDLGKTMKDQALKDDDAETGLTDGEEKEEPKEEEKLGKLQYSLDYDFQNNQLLVGIIQAAELPALDMGGTSDPYVKVFLLPDKKKKFETKVHRKTLNPVFNEQFTFKVPYSELGGKTLVMAVYDFDRFSKHDIIGEFKVPMNTVDFGHVTEEWRDLQSAEKEEQEKLGDICFSLRYVPTAGKLTVVILEAKNLKKMDVGGLSDPYVKIHLMQNGKRLKKKKTTIKKNTLNPYYNESFSFEVPFEQIQKVQVVVTVLDYDKIGKNDAIGKVFVGYNSTGAELRHWSDMLANPRRPIAQWHTLQVEEEVDAMLAVKK.

Over 1 to 57 the chain is Vesicular; that stretch reads MVSASHPEALAAPVTTVATLVPHNATEPASPGEGKEDAFSKLKQKFMNELHKIPLPP. The N-linked (GlcNAc...) asparagine glycan is linked to N24. Residues 58-79 traverse the membrane as a helical segment; it reads WALIAIAIVAVLLVVTCCFCVC. 5 S-palmitoyl cysteine lipidation sites follow: C74, C75, C77, C79, and C82. Residues 80–421 lie on the Cytoplasmic side of the membrane; it reads KKCLFKKKNK…EVDAMLAVKK (342 aa). The segment at 112–141 is disordered; sequence TMKDQALKDDDAETGLTDGEEKEEPKEEEK. Residues 121-133 show a composition bias toward acidic residues; sequence DDAETGLTDGEEK. Position 128 is a phosphothreonine (T128). A phospholipid binding region spans residues 135–381; the sequence is EPKEEEKLGK…AIGKVFVGYN (247 aa). The region spanning 141–260 is the C2 1 domain; it reads KLGKLQYSLD…DFGHVTEEWR (120 aa). Residues L171, D172, and D178 each contribute to the Ca(2+) site. Y229 carries the phosphotyrosine modification. The Ca(2+) site is built by D230, F231, D232, S235, K236, and D238. The residue at position 264 (S264) is a Phosphoserine. Residues 272-405 enclose the C2 2 domain; sequence KLGDICFSLR…NPRRPIAQWH (134 aa). Ca(2+) is bound by residues D303 and D309. Residues S342 and S344 each carry the phosphoserine modification. Ca(2+) is bound by residues D363, D365, and D371.

The protein belongs to the synaptotagmin family. In terms of assembly, homotetramer. Heterodimer; heterodimerizes with SYT2 in presence of calcium. Interacts with SCAMP5. Interacts with STON2. Forms a complex with SV2B, syntaxin 1 and SNAP25. Interacts with SV2A, SV2B and SV2C. Interacts with RIMS1. Interacts with PRRT2. Interacts with DNAJC5 in a phosphorylation-dependent manner. Interacts (via N-terminus) with RAB3A. Interacts with SYT12. Interacts with calmodulin. Interacts with DNM1 (via C-terminal proline-rich domain (PRD)); this interaction facilitates vesicle fission during clathrin-mediated endocytosis (CME). As to quaternary structure, (Microbial infection) Interacts with C.botulinum neurotoxin type B (BoNT/B, botB). Has lower affinity for BoNT/B than Syt2; mutating its residues to match those in Syt2 increases its affinity. (Microbial infection) Interacts with C.botulinum neurotoxin type G (BoNT/G, botG). Ca(2+) is required as a cofactor. Post-translationally, glycosylated. As to expression, expressed in the brain (at protein level). Predominantly expressed in rostral, phylogenetically younger brain regions, and in some endocrine tissues.

Its subcellular location is the cytoplasmic vesicle. It localises to the secretory vesicle membrane. The protein localises to the secretory vesicle. It is found in the synaptic vesicle membrane. The protein resides in the chromaffin granule membrane. Its subcellular location is the cytoplasm. Its function is as follows. Calcium sensor that participates in triggering neurotransmitter release at the synapse. May have a regulatory role in the membrane interactions during trafficking of synaptic vesicles at the active zone of the synapse. It binds acidic phospholipids with a specificity that requires the presence of both an acidic head group and a diacyl backbone. A Ca(2+)-dependent interaction between synaptotagmin and putative receptors for activated protein kinase C has also been reported. It can bind to at least three additional proteins in a Ca(2+)-independent manner; these are neurexins, syntaxin and AP2. Plays a role in dendrite formation by melanocytes. Functionally, (Microbial infection) Receptor for C.botulinum neurotoxin type B (BoNT/B, botB); interaction is improved in the presence of gangliosides. BoNT/B toxin binds to the membrane proximal vesicular domain of Syt1 (residues 32-51). In terms of biological role, (Microbial infection) Receptor for C.botulinum neurotoxin type G (BoNT/G, botG); unlike the case with BoNT/B, interaction is not improved in the presence of gangliosides. BoNT/G toxin binds to the vesicular domain of Syt1 (residues 32-53). This chain is Synaptotagmin-1, found in Rattus norvegicus (Rat).